A 619-amino-acid polypeptide reads, in one-letter code: Coagulation factor X-activating enzyme heavy chain (619 aa).

An N-terminal signal peptide occupies residues 1 to 20 (MMQVLLVTISLAVFPYQGSS). The propeptide occupies 21 to 188 (IILESGNVND…SDKPIKKASQ (168 aa)). One can recognise a Peptidase M12B domain in the interval 199-393 (IFIELVIIVD…YKPKCIFNPP (195 aa)). Cysteine 215 and cysteine 251 form a disulfide bridge. Residues asparagine 216 and asparagine 257 are each glycosylated (N-linked (GlcNAc...) (complex) asparagine). 3 disulfides stabilise this stretch: cysteine 308/cysteine 388, cysteine 348/cysteine 372, and cysteine 350/cysteine 355. Histidine 333 contributes to the Zn(2+) binding site. The active site involves glutamate 334. Positions 337 and 343 each coordinate Zn(2+). Residues asparagine 351 and asparagine 371 are each glycosylated (N-linked (GlcNAc...) (complex) asparagine). The region spanning 401–487 (PPVCGNEIWE…ECPRDQLQQN (87 aa)) is the Disintegrin domain. Valine 403, asparagine 406, isoleucine 408, glutamate 410, glutamate 413, and aspartate 416 together coordinate Ca(2+). 14 disulfide bridges follow: cysteine 404–cysteine 433, cysteine 415–cysteine 428, cysteine 417–cysteine 423, cysteine 427–cysteine 450, cysteine 441–cysteine 447, cysteine 446–cysteine 472, cysteine 459–cysteine 479, cysteine 466–cysteine 498, cysteine 491–cysteine 503, cysteine 510–cysteine 560, cysteine 525–cysteine 571, cysteine 538–cysteine 548, cysteine 555–cysteine 597, and cysteine 591–cysteine 603. Positions 465 to 467 (ECD) match the D/ECD-tripeptide motif. Aspartate 467, valine 468, glutamate 470, aspartate 482, and glutamine 483 together coordinate Ca(2+).

This sequence belongs to the venom metalloproteinase (M12B) family. P-III subfamily. P-IIId sub-subfamily. As to quaternary structure, heterotrimer; disulfide-linked. The heterotrimer consists of 1 heavy chain and 2 light chains (lectins): LC1 and LC2. The cofactor is Zn(2+). In terms of processing, N-glycosylated; probably required for conformation. Removal of easily accessible sugars does not change its functional capacity, but removal of the core sugars with N-glycanase causes a virtually complete loss of enzyme activity, apparently as a result of major conformational changes in the molecule. Not O-glycosylated. In terms of tissue distribution, expressed by the venom gland.

It localises to the secreted. The enzyme catalyses Specifically activates several components of the blood clotting system, including coagulation factor X, coagulation factor IX and protein C by cleavage of Arg-|-Xaa bonds. Has no action on insulin B chain.. Its function is as follows. Catalytic subunit of blood coagulation factor X-activating enzyme. Activates coagulation factor X (F10) by cleaving the Arg-Ile bond and is also able to activate coagulation factor IX (F9) and protein S (PROS1) by specific cleavage of Arg-Ile and Arg-Val bonds. In Daboia siamensis (Eastern Russel's viper), this protein is Coagulation factor X-activating enzyme heavy chain.